Reading from the N-terminus, the 63-residue chain is UPF0370 protein ECA1289 (63 aa).

A helical membrane pass occupies residues 3–23 (WLADYWWIILIILIGMLINGI). The interval 39 to 63 (PKLPPHRDNNDKWDNEEDDWPKKKP) is disordered.

This sequence belongs to the UPF0370 family.

It localises to the cell membrane. The chain is UPF0370 protein ECA1289 from Pectobacterium atrosepticum (strain SCRI 1043 / ATCC BAA-672) (Erwinia carotovora subsp. atroseptica).